The sequence spans 336 residues: Mitochondrial thiamine diphosphate carrier 1 (336 aa).

The next 6 helical transmembrane spans lie at 11–27 (RRALVDSLAGAISGGIS), 88–105 (VPALFMYMPYTAIQFTVL), 127–150 (YLSYVSGAIAGCTATIGSYPFDLL), 182–199 (LYSGLSPTLVEIIPYAGL), 230–246 (SVSSFQLFLCGFAAGTF), and 303–322 (GLFPSLVKSAPAGAVTFVVY). Solcar repeat units lie at residues 11–111 (RRAL…LKTF), 124–210 (LSPY…FKRS), and 231–328 (VSSF…ISDW).

It belongs to the mitochondrial carrier (TC 2.A.29) family. As to expression, ubiquitous with highest expression in pollen.

Its subcellular location is the mitochondrion inner membrane. Its function is as follows. Mitochondrial transporter that mediates uptake of thiamine diphosphate (ThDP) into mitochondria. The chain is Mitochondrial thiamine diphosphate carrier 1 from Zea mays (Maize).